The following is a 194-amino-acid chain: WASH complex subunit 3 (194 aa).

Methionine 1 carries the N-acetylmethionine modification. The stretch at 46–74 (AVCEEKLADLSLRIQQIETTLNILDAKLS) forms a coiled coil. Disordered stretches follow at residues 94 to 126 (VTNGSHSETTSEQTQQNSTQDSGAQESEAPSEN) and 158 to 194 (SEGLDPELLEKPDAPVPNGESERAVEESSDSDSSFSD). Positions 98–113 (SHSETTSEQTQQNSTQ) are enriched in low complexity. Polar residues predominate over residues 114 to 126 (DSGAQESEAPSEN).

This sequence belongs to the CCDC53 family. In terms of assembly, component of the WASH core complex also described as WASH regulatory complex (SHRC) composed of WASHC1, WASHC2, WASHC3, WASHC4 and WASHC5. The WASH core complex associates via WASHC2 with the F-actin-capping protein dimer (formed by CAPZA1, CAPZA2 or CAPZA3 and CAPZB) in a transient or substoichiometric manner which was initially described as WASH complex.

The protein localises to the early endosome. Functionally, acts as a component of the WASH core complex that functions as a nucleation-promoting factor (NPF) at the surface of endosomes, where it recruits and activates the Arp2/3 complex to induce actin polymerization, playing a key role in the fission of tubules that serve as transport intermediates during endosome sortingg. This Mus musculus (Mouse) protein is WASH complex subunit 3.